A 904-amino-acid polypeptide reads, in one-letter code: Envelope glycoprotein B (904 aa).

An N-terminal signal peptide occupies residues 1 to 22; the sequence is MRGGGLICALVVGALVAAVASA. Over 23–771 the chain is Virion surface; the sequence is APAAPAAPRA…SGVSSFMSNP (749 aa). The disordered stretch occupies residues 40–83; the sequence is VAANGGPASRPPPVPSPATTKARKRKTKKPPKRPEATPPPDANA. Basic residues predominate over residues 60-70; the sequence is KARKRKTKKPP. N-linked (GlcNAc...) asparagine; by host glycosylation is found at Asn-82 and Asn-136. Disulfide bonds link Cys-111–Cys-570, Cys-128–Cys-526, Cys-202–Cys-266, Cys-359–Cys-407, and Cys-593–Cys-630. Involved in fusion and/or binding to host membrane regions lie at residues 168–174 and 253–260; these read VWFGHRY and RVEAFHRY. N-linked (GlcNAc...) asparagine; by host glycosylation is found at Asn-393, Asn-425, and Asn-486. The disordered stretch occupies residues 467 to 490; the sequence is QDRKPRNATPAPLREAPSANASVE. The N-linked (GlcNAc...) asparagine; by host glycan is linked to Asn-671. 2 hydrophobic membrane proximal region regions span residues 716–769 and 728–768; these read IDTV…SFMS and MFAG…SSFM. A helical transmembrane segment spans residues 772–792; sequence FGALAVGLLVLAGLVAAFFAF. The Intravirion portion of the chain corresponds to 793–904; that stretch reads RYVLQLQRNP…EDEAGDEDEL (112 aa). The segment at 816-835 is disordered; the sequence is TSDPGGVGGEGEEGAEGGGF. A Golgi targeting motif is present at residues 849–852; the sequence is YMAL. The tract at residues 883-904 is disordered; it reads KRNKARYSPLHNEDEAGDEDEL. Residues 889–892 carry the Internalization motif motif; sequence YSPL.

This sequence belongs to the herpesviridae glycoprotein B family. Homotrimer; disulfide-linked. Binds to heparan sulfate proteoglycans. Interacts with gH/gL heterodimer.

The protein localises to the virion membrane. Its subcellular location is the host cell membrane. It localises to the host endosome membrane. The protein resides in the host Golgi apparatus membrane. Envelope glycoprotein that forms spikes at the surface of virion envelope. Essential for the initial attachment to heparan sulfate moieties of the host cell surface proteoglycans. Involved in fusion of viral and cellular membranes leading to virus entry into the host cell. Following initial binding to its host receptors, membrane fusion is mediated by the fusion machinery composed at least of gB and the heterodimer gH/gL. May be involved in the fusion between the virion envelope and the outer nuclear membrane during virion egress. This is Envelope glycoprotein B from Homo sapiens (Human).